The following is a 213-amino-acid chain: Thiamine-phosphate synthase (213 aa).

4-amino-2-methyl-5-(diphosphooxymethyl)pyrimidine-binding positions include 38–42 (QLREK) and Asp-70. The Mg(2+) site is built by Asp-71 and Glu-90. Ser-109 serves as a coordination point for 4-amino-2-methyl-5-(diphosphooxymethyl)pyrimidine. Position 135-137 (135-137 (TQT)) interacts with 2-[(2R,5Z)-2-carboxy-4-methylthiazol-5(2H)-ylidene]ethyl phosphate. Lys-138 is a binding site for 4-amino-2-methyl-5-(diphosphooxymethyl)pyrimidine. Residues Gly-165 and 185 to 186 (VS) contribute to the 2-[(2R,5Z)-2-carboxy-4-methylthiazol-5(2H)-ylidene]ethyl phosphate site.

Belongs to the thiamine-phosphate synthase family. Mg(2+) serves as cofactor.

It carries out the reaction 2-[(2R,5Z)-2-carboxy-4-methylthiazol-5(2H)-ylidene]ethyl phosphate + 4-amino-2-methyl-5-(diphosphooxymethyl)pyrimidine + 2 H(+) = thiamine phosphate + CO2 + diphosphate. The catalysed reaction is 2-(2-carboxy-4-methylthiazol-5-yl)ethyl phosphate + 4-amino-2-methyl-5-(diphosphooxymethyl)pyrimidine + 2 H(+) = thiamine phosphate + CO2 + diphosphate. It catalyses the reaction 4-methyl-5-(2-phosphooxyethyl)-thiazole + 4-amino-2-methyl-5-(diphosphooxymethyl)pyrimidine + H(+) = thiamine phosphate + diphosphate. It participates in cofactor biosynthesis; thiamine diphosphate biosynthesis; thiamine phosphate from 4-amino-2-methyl-5-diphosphomethylpyrimidine and 4-methyl-5-(2-phosphoethyl)-thiazole: step 1/1. Condenses 4-methyl-5-(beta-hydroxyethyl)thiazole monophosphate (THZ-P) and 2-methyl-4-amino-5-hydroxymethyl pyrimidine pyrophosphate (HMP-PP) to form thiamine monophosphate (TMP). The sequence is that of Thiamine-phosphate synthase from Lacticaseibacillus paracasei (strain ATCC 334 / BCRC 17002 / CCUG 31169 / CIP 107868 / KCTC 3260 / NRRL B-441) (Lactobacillus paracasei).